The chain runs to 403 residues: Tyrosine--tRNA ligase (403 aa).

The 'HIGH' region signature appears at 45–54 (PTAPDLHLGH). The 'KMSKS' region motif lies at 229–233 (KMSKS). ATP is bound at residue lysine 232. The region spanning 341–402 (VALCRLLAEA…GKRRFARITF (62 aa)) is the S4 RNA-binding domain.

Belongs to the class-I aminoacyl-tRNA synthetase family. TyrS type 2 subfamily. In terms of assembly, homodimer.

The protein resides in the cytoplasm. The catalysed reaction is tRNA(Tyr) + L-tyrosine + ATP = L-tyrosyl-tRNA(Tyr) + AMP + diphosphate + H(+). Its function is as follows. Catalyzes the attachment of tyrosine to tRNA(Tyr) in a two-step reaction: tyrosine is first activated by ATP to form Tyr-AMP and then transferred to the acceptor end of tRNA(Tyr). This is Tyrosine--tRNA ligase from Geobacter sulfurreducens (strain ATCC 51573 / DSM 12127 / PCA).